The sequence spans 273 residues: Nitrogenase iron protein (273 aa).

8–15 (GKGGIGKS) serves as a coordination point for ATP. Cys-94 contacts [4Fe-4S] cluster. Position 97 is an ADP-ribosylarginine; by dinitrogenase reductase ADP-ribosyltransferase (Arg-97). Cys-130 provides a ligand contact to [4Fe-4S] cluster.

It belongs to the NifH/BchL/ChlL family. In terms of assembly, homodimer. [4Fe-4S] cluster serves as cofactor. In terms of processing, the reversible ADP-ribosylation of Arg-97 inactivates the nitrogenase reductase and regulates nitrogenase activity.

It carries out the reaction N2 + 8 reduced [2Fe-2S]-[ferredoxin] + 16 ATP + 16 H2O = H2 + 8 oxidized [2Fe-2S]-[ferredoxin] + 2 NH4(+) + 16 ADP + 16 phosphate + 6 H(+). The key enzymatic reactions in nitrogen fixation are catalyzed by the nitrogenase complex, which has 2 components: the iron protein and the molybdenum-iron protein. The polypeptide is Nitrogenase iron protein (Desulforapulum autotrophicum (strain ATCC 43914 / DSM 3382 / VKM B-1955 / HRM2) (Desulfobacterium autotrophicum)).